Reading from the N-terminus, the 121-residue chain is Large ribosomal subunit protein uL22 (121 aa).

It belongs to the universal ribosomal protein uL22 family. As to quaternary structure, part of the 50S ribosomal subunit.

In terms of biological role, this protein binds specifically to 23S rRNA; its binding is stimulated by other ribosomal proteins, e.g. L4, L17, and L20. It is important during the early stages of 50S assembly. It makes multiple contacts with different domains of the 23S rRNA in the assembled 50S subunit and ribosome. The globular domain of the protein is located near the polypeptide exit tunnel on the outside of the subunit, while an extended beta-hairpin is found that lines the wall of the exit tunnel in the center of the 70S ribosome. The protein is Large ribosomal subunit protein uL22 of Salinibacter ruber (strain DSM 13855 / M31).